The sequence spans 197 residues: Beta-crystallin A2 (197 aa).

Positions 1–11 are N-terminal arm; sequence MSGTLSQGSSP. Beta/gamma crystallin 'Greek key' domains follow at residues 12–52 and 53–99; these read ARLT…KVES and GAWV…RPLL. The segment at 100–105 is connecting peptide; the sequence is CANHSD. Beta/gamma crystallin 'Greek key' domains follow at residues 106 to 147 and 148 to 196; these read SRVT…KVTS and GAWV…RRVQ.

It belongs to the beta/gamma-crystallin family. Homo/heterodimer, or complexes of higher-order. The structure of beta-crystallin oligomers seems to be stabilized through interactions between the N-terminal arms.

In terms of biological role, crystallins are the dominant structural components of the vertebrate eye lens. This chain is Beta-crystallin A2 (CRYBA2), found in Macropus fuliginosus (Western gray kangaroo).